The chain runs to 311 residues: Trem-like transcript 1 protein (311 aa).

The first 15 residues, 1–15 (MGLTLLLLLLLGLEG), serve as a signal peptide directing secretion. The Ig-like V-type domain occupies 16 to 121 (QGIVGSLPEV…PQILHRVSLN (106 aa)). The Extracellular segment spans residues 16 to 162 (QGIVGSLPEV…EPSQDEKSIP (147 aa)). 2 cysteine pairs are disulfide-bonded: Cys38–Cys104 and Cys52–Cys59. Residues 163–183 (LIWGAVLLVGLLVAAVVLFAV) traverse the membrane as a helical segment. Residues 184 to 311 (MAKRKQGNRL…NPPNNQTPSS (128 aa)) lie on the Cytoplasmic side of the membrane. A lipid anchor (S-palmitoyl cysteine) is attached at Cys196. A disordered region spans residues 229 to 263 (VPHIRLDSPPSFDNTTYTSLPLDSPSGKPSLPAPS). A compositionally biased stretch (polar residues) spans 239–249 (SFDNTTYTSLP). The short motif at 279–284 (VTYATV) is the ITIM element. A disordered region spans residues 287–311 (PGGNKGGGTSCGPAQNPPNNQTPSS).

When phosphorylated, interacts with PTPN6. When phosphorylated, interacts with PTPN11. Post-translationally, phosphorylated on tyrosine residues. In terms of tissue distribution, detected in platelets, monocytic leukemia and in T-cell leukemia.

It localises to the cell membrane. The protein resides in the cytoplasm. Cell surface receptor that may play a role in the innate and adaptive immune response. The polypeptide is Trem-like transcript 1 protein (TREML1) (Homo sapiens (Human)).